A 313-amino-acid polypeptide reads, in one-letter code: MITFPHRHLLGIKGLTEQDITLLLDRADEAVKISRQREKKTSSLRGLTQINLFFEASTRTQSSFELAGKRLGADVMNMSVGNSSVKKGETLIDTAMTLNAMHPDVLVVRHSSAGAASLLAQKVSCSVVNAGDGQHEHPTQALLDALTIRRAKGKLSRIIVAICGDVLHSRVARSNILLLNQMGARVRVVAPATLLPAGIAEMGAEVYHSMAEGLKDADVVMMLRLQRERMAGSFVPSVREYFHYYGLDAEKLKAAKDDALVMHPGPMNRGVEIASEIADGPQSVIEQQVEMGVAVRMAVMETLLLSQNQGPRV.

2 residues coordinate carbamoyl phosphate: arginine 59 and threonine 60. L-aspartate is bound at residue lysine 87. Arginine 109, histidine 137, and glutamine 140 together coordinate carbamoyl phosphate. Positions 170 and 224 each coordinate L-aspartate. Positions 265 and 266 each coordinate carbamoyl phosphate.

Belongs to the aspartate/ornithine carbamoyltransferase superfamily. ATCase family. As to quaternary structure, heterododecamer (2C3:3R2) of six catalytic PyrB chains organized as two trimers (C3), and six regulatory PyrI chains organized as three dimers (R2).

It catalyses the reaction carbamoyl phosphate + L-aspartate = N-carbamoyl-L-aspartate + phosphate + H(+). Its pathway is pyrimidine metabolism; UMP biosynthesis via de novo pathway; (S)-dihydroorotate from bicarbonate: step 2/3. Functionally, catalyzes the condensation of carbamoyl phosphate and aspartate to form carbamoyl aspartate and inorganic phosphate, the committed step in the de novo pyrimidine nucleotide biosynthesis pathway. The protein is Aspartate carbamoyltransferase catalytic subunit of Sinorhizobium medicae (strain WSM419) (Ensifer medicae).